Consider the following 463-residue polypeptide: tRNA modification GTPase MnmE (463 aa).

Residues Arg29, Glu91, and Arg130 each contribute to the (6S)-5-formyl-5,6,7,8-tetrahydrofolate site. Positions Gly225–Gln384 constitute a TrmE-type G domain. A K(+)-binding site is contributed by Asn235. Residues Asn235–Ser240, Thr254–Thr260, and Asp279–Gly282 each bind GTP. Ser239 lines the Mg(2+) pocket. Residues Thr254, Leu256, and Thr259 each coordinate K(+). Thr260 is a binding site for Mg(2+). Lys463 provides a ligand contact to (6S)-5-formyl-5,6,7,8-tetrahydrofolate.

The protein belongs to the TRAFAC class TrmE-Era-EngA-EngB-Septin-like GTPase superfamily. TrmE GTPase family. Homodimer. Heterotetramer of two MnmE and two MnmG subunits. K(+) is required as a cofactor.

The protein localises to the cytoplasm. Exhibits a very high intrinsic GTPase hydrolysis rate. Involved in the addition of a carboxymethylaminomethyl (cmnm) group at the wobble position (U34) of certain tRNAs, forming tRNA-cmnm(5)s(2)U34. This is tRNA modification GTPase MnmE from Trichormus variabilis (strain ATCC 29413 / PCC 7937) (Anabaena variabilis).